Reading from the N-terminus, the 277-residue chain is Shikimate dehydrogenase (NADP(+)) (277 aa).

Shikimate-binding positions include 15-17 and T62; that span reads SLS. K66 serves as the catalytic Proton acceptor. N87 and D102 together coordinate shikimate. NADP(+)-binding positions include 127–131, 151–156, and I219; these read GAGGA and NRTVDK. Shikimate is bound at residue Y221. G242 serves as a coordination point for NADP(+).

It belongs to the shikimate dehydrogenase family. As to quaternary structure, homodimer.

The enzyme catalyses shikimate + NADP(+) = 3-dehydroshikimate + NADPH + H(+). Its pathway is metabolic intermediate biosynthesis; chorismate biosynthesis; chorismate from D-erythrose 4-phosphate and phosphoenolpyruvate: step 4/7. Involved in the biosynthesis of the chorismate, which leads to the biosynthesis of aromatic amino acids. Catalyzes the reversible NADPH linked reduction of 3-dehydroshikimate (DHSA) to yield shikimate (SA). This Bacillus thuringiensis subsp. konkukian (strain 97-27) protein is Shikimate dehydrogenase (NADP(+)).